The following is a 325-amino-acid chain: NADH-quinone oxidoreductase subunit H (325 aa).

8 consecutive transmembrane segments (helical) span residues 11–31 (ILLTILKAVVILLVVVTCGAF), 81–101 (VIFTLAPMIAFTSLLLAFAIV), 114–134 (IGILFFLMMAGLAVYAVLFAG), 154–174 (LSYEVFLGLSLMGVVAQAGSF), 186–206 (VWNVIPQFFGFITFAIAGVAV), 237–257 (FFVGEYIGIVTISALMVTLFF), 265–285 (LPPFIWFALKTAFFMMMFILI), and 304–324 (ICLPLTLINLLVTAAVILWQA).

It belongs to the complex I subunit 1 family. As to quaternary structure, NDH-1 is composed of 13 different subunits. Subunits NuoA, H, J, K, L, M, N constitute the membrane sector of the complex.

The protein resides in the cell inner membrane. The catalysed reaction is a quinone + NADH + 5 H(+)(in) = a quinol + NAD(+) + 4 H(+)(out). Functionally, NDH-1 shuttles electrons from NADH, via FMN and iron-sulfur (Fe-S) centers, to quinones in the respiratory chain. The immediate electron acceptor for the enzyme in this species is believed to be ubiquinone. Couples the redox reaction to proton translocation (for every two electrons transferred, four hydrogen ions are translocated across the cytoplasmic membrane), and thus conserves the redox energy in a proton gradient. This subunit may bind ubiquinone. This is NADH-quinone oxidoreductase subunit H from Escherichia coli O139:H28 (strain E24377A / ETEC).